The chain runs to 2465 residues: Serine/threonine-protein kinase TOR (2465 aa).

11 HEAT repeats span residues 184–221 (VHVPEFVDAIWVALRDPKQAVRERAVEALRACLHVIEK), 271–308 (SRYREVADIVLNYLRHRDQLVRRSITSLLPRIAHFLRD), 348–389 (AELV…AMGP), 549–587 (RLVEEIVEKLLMAAVADADVGVRSSVFKALYRNPSFDDF), 588–625 (LAQADIMTSIFVALNDEEYHVRELAISVAGRLSEKNPA), 717–755 (QYLPELMPLVVDALLDGGAVSKREVAVATLGQVIQSTGY), 761–799 (NEYPPLLGLLLKLLNGELEWSTRLEVLKVLGIMGALDPH), 888–926 (PYLPKVLPELFRAVRMCEDGGLKEFITWKLGTLVSIVRQ), 981–1018 (MYILHILPSCIQVLGDAERCNDYYYVPDILHTLEVFGG), 1022–1059 (EHMHLVAPVLVRLFKVELVDIRRRAIVTLTKLIPTVQV), and 1061–1098 (THVSVLVHHLKLVLDGNNDDLRKDAAEALCCLAHALGE). Residues 1158–1191 (DFGGVPSEEADETQRQPRSHQVNDVRLRSAGEAS) form a disordered region. The 581-residue stretch at 1297–1877 (LLGALAEKCR…MYPLLVACKS (581 aa)) folds into the FAT domain. Residues 2051–2369 (FVPQLIVITS…PPRGAREREL (319 aa)) form the PI3K/PI4K catalytic domain. Positions 2057-2063 (VITSKQR) are G-loop. The tract at residues 2230–2238 (GLGDRHPSN) is catalytic loop. The activation loop stretch occupies residues 2250-2275 (HIDFGDCFEASMNREKFPEKVPFRLT). Residues 2401-2431 (RDFSSGSSLSGAGSSTQHGNEHLASGDTREV) are disordered. Low complexity predominate over residues 2404–2415 (SSGSSLSGAGSS). The region spanning 2433–2465 (PGLSVKVQVQRLILQATSHENLCQNYVGWCPFW) is the FATC domain.

Belongs to the PI3/PI4-kinase family. As to quaternary structure, the target of rapamycin complex 1 (TORC1) is composed of at least RAPTOR, LST8 and TOR.

It catalyses the reaction L-seryl-[protein] + ATP = O-phospho-L-seryl-[protein] + ADP + H(+). The enzyme catalyses L-threonyl-[protein] + ATP = O-phospho-L-threonyl-[protein] + ADP + H(+). Insensitive to inhibition by rapamycin. Its function is as follows. Component of TORC1 complex, which is an essential cell growth regulator that controls plant development. Acts through the phosphorylation of downstream effectors that are recruited by the binding partner RAPTOR. Acts by activating transcription, protein synthesis and ribosome biogenesis, and inhibiting mRNA degradation and autophagy. The chain is Serine/threonine-protein kinase TOR from Oryza sativa subsp. japonica (Rice).